Consider the following 500-residue polypeptide: MSFENLHKVNAEALEDAVVEICSSLQVDAAKLDELTAYFIECMEKGLNNTSVGEEKTVDKGLPMIPTYVTSLPNGTERGVLLAADLGGTHFRVCSVTLNGDGTFDMQQLKSKIPEEYLNDKDVTSEELFSYLGRRTRAFVRKHHPELLKSTGENIKPLKMGFTFSYPVDQTSLSSGTLIRWTKSFKIEDTVGKDVVRLYQEQLDIQGLSMINVVALTNDTVGTFLSHCYTSGSRPSSAGEISEPVIGCIFGTGTNGCYMEDIENIKKLPDELRTRLLHEGKTQMCINIEWGSFDNELKHLSATKYDIDIDQKFSPNPGYHLFEKRISGMYLGELLRNILVDLHARGLILGQYRNYDQLPHRLKTPFQLCSEVLSRIEIDDSTNLRETELSFLQSLRLPTTFEERKAIQNLVRSITRRSAYLAAVPIAAILIKTNALNKRYHGEVEIGFDGYVIEYYPGFRSMLRHALALSPIGTEGERKIHLRLAKDGSGVGAALCALVA.

Ser-2 is modified (N-acetylserine). The residue at position 2 (Ser-2) is a Phosphoserine. Residues 12-498 enclose the Hexokinase domain; the sequence is EALEDAVVEI…SGVGAALCAL (487 aa). The tract at residues 74–217 is hexokinase small subdomain; sequence NGTERGVLLA…LSMINVVALT (144 aa). Lys-110 serves as a coordination point for ATP. The interval 159 to 185 is glucose-binding; it reads KMGFTFSYPVDQTSLSSGTLIRWTKSF. Positions 218–487 are hexokinase large subdomain; it reads NDTVGTFLSH…RKIHLRLAKD (270 aa). Ser-470 is subject to Phosphoserine. 487 to 492 is an ATP binding site; the sequence is DGSGVG.

It belongs to the hexokinase family.

Its subcellular location is the cytoplasm. The enzyme catalyses D-glucose + ATP = D-glucose 6-phosphate + ADP + H(+). It functions in the pathway carbohydrate degradation; glycolysis; D-glyceraldehyde 3-phosphate and glycerone phosphate from D-glucose: step 1/4. In terms of biological role, putative glucokinase involved in phosphorylation of aldohexoses and glucose uptake. Involved in sporulation. Required for the full activation of the early meiotic inducer IME1. The sequence is that of Putative glucokinase-2 (EMI2) from Saccharomyces cerevisiae (strain ATCC 204508 / S288c) (Baker's yeast).